The primary structure comprises 208 residues: Small ribosomal subunit protein uS4 (208 aa).

The S4 RNA-binding domain maps to 97–158 (TRLDNVIYRM…RAQKYLCVQE (62 aa)).

Belongs to the universal ribosomal protein uS4 family. Part of the 30S ribosomal subunit. Contacts protein S5. The interaction surface between S4 and S5 is involved in control of translational fidelity.

In terms of biological role, one of the primary rRNA binding proteins, it binds directly to 16S rRNA where it nucleates assembly of the body of the 30S subunit. Its function is as follows. With S5 and S12 plays an important role in translational accuracy. In Xylella fastidiosa (strain M12), this protein is Small ribosomal subunit protein uS4.